Consider the following 234-residue polypeptide: Putative lipoyltransferase 2, mitochondrial (234 aa).

The transit peptide at 1 to 28 (MPFVRPLVTVVRAGRHSYSAGLQLQQRL) directs the protein to the mitochondrion. The BPL/LPL catalytic domain maps to 39–220 (AEFRNYLVLQ…SFAKVFECRL (182 aa)). Residues 83-90 (RGGLITFH), 150-152 (AIG), and 163-165 (GIG) each bind substrate. Cys181 (acyl-thioester intermediate) is an active-site residue.

It belongs to the LipB family.

It localises to the mitochondrion. The catalysed reaction is octanoyl-[ACP] + L-lysyl-[protein] = N(6)-octanoyl-L-lysyl-[protein] + holo-[ACP] + H(+). It participates in protein modification; protein lipoylation via endogenous pathway; protein N(6)-(lipoyl)lysine from octanoyl-[acyl-carrier-protein]: step 1/2. Functionally, catalyzes the transfer of endogenously produced octanoic acid from octanoyl-acyl-carrier-protein onto the lipoyl domains of lipoate-dependent enzymes. Lipoyl-ACP can also act as a substrate although octanoyl-ACP is likely to be the physiological substrate. The chain is Putative lipoyltransferase 2, mitochondrial from Drosophila melanogaster (Fruit fly).